Reading from the N-terminus, the 506-residue chain is Maturase K (506 aa).

The protein belongs to the intron maturase 2 family. MatK subfamily.

The protein resides in the plastid. It is found in the chloroplast. In terms of biological role, usually encoded in the trnK tRNA gene intron. Probably assists in splicing its own and other chloroplast group II introns. The chain is Maturase K from Trifolium hirtum (Rose clover).